Here is a 273-residue protein sequence, read N- to C-terminus: Shikimate dehydrogenase (NADP(+)) (273 aa).

Residues 14 to 16 (SKS) and T61 contribute to the shikimate site. The active-site Proton acceptor is the K65. E77 contacts NADP(+). Residues N86 and D102 each contribute to the shikimate site. NADP(+) contacts are provided by residues 126–130 (GAGGA), 150–155 (NRTYEK), and M213. Shikimate is bound at residue Y215. G237 provides a ligand contact to NADP(+).

This sequence belongs to the shikimate dehydrogenase family. Homodimer.

The catalysed reaction is shikimate + NADP(+) = 3-dehydroshikimate + NADPH + H(+). It functions in the pathway metabolic intermediate biosynthesis; chorismate biosynthesis; chorismate from D-erythrose 4-phosphate and phosphoenolpyruvate: step 4/7. Its function is as follows. Involved in the biosynthesis of the chorismate, which leads to the biosynthesis of aromatic amino acids. Catalyzes the reversible NADPH linked reduction of 3-dehydroshikimate (DHSA) to yield shikimate (SA). The protein is Shikimate dehydrogenase (NADP(+)) of Aliivibrio fischeri (strain MJ11) (Vibrio fischeri).